Consider the following 289-residue polypeptide: Rhodopsin (289 aa).

Residues 1–7 are Extracellular-facing; the sequence is YLVNPAA. Residues 8–32 form a helical membrane-spanning segment; it reads YAAPGAYMFLLILVGFPVNFLTLYV. Over 33 to 44 the chain is Cytoplasmic; sequence TLEHKKLRTPLN. A helical transmembrane segment spans residues 45-67; that stretch reads YILLNLAVADLFMVLGGFTTTMY. The Extracellular portion of the chain corresponds to 68–81; the sequence is TSMHGYFVLGRLGC. A disulfide bridge links C81 with C158. A helical transmembrane segment spans residues 82–104; it reads NLEGFFATLGGEIALWSLVVLAI. The 'Ionic lock' involved in activated form stabilization motif lies at 105 to 107; it reads ERW. Residues 105-123 are Cytoplasmic-facing; that stretch reads ERWIVVCKPISNFRFTEDH. The chain crosses the membrane as a helical span at residues 124 to 144; that stretch reads AIMGLAFSWVMALTCAVPPLV. Residues 145–173 lie on the Extracellular side of the membrane; it reads GWSRYIPEGMQCSCGVDYYTRAEGFNNES. A glycan (N-linked (GlcNAc...) asparagine) is linked at N171. Residues 174-195 form a helical membrane-spanning segment; that stretch reads FVIYMFIVHFLIPLSNNFFCYG. Residues 196–223 lie on the Cytoplasmic side of the membrane; the sequence is RLLCAVKEAAAAQQESETTQRAEREVSR. The chain crosses the membrane as a helical span at residues 224-245; it reads MVVMMVVSFLMCWLPYASVAWY. Topologically, residues 246-257 are extracellular; the sequence is IFCNQGSEFGPI. A helical transmembrane segment spans residues 258–279; it reads FMTLPAFFAKSSAIYNPLIYIC. K267 bears the N6-(retinylidene)lysine mark. Residues 280–289 are Cytoplasmic-facing; the sequence is MNKHVRHCMI.

It belongs to the G-protein coupled receptor 1 family. Opsin subfamily. Post-translationally, phosphorylated on some or all of the serine and threonine residues present in the C-terminal region. In terms of processing, contains one covalently linked retinal chromophore.

Its subcellular location is the membrane. It is found in the cell projection. It localises to the cilium. The protein localises to the photoreceptor outer segment. Photoreceptor required for image-forming vision at low light intensity. While most salt water fish species use retinal as chromophore, most freshwater fish use 3-dehydroretinal, or a mixture of retinal and 3-dehydroretinal. Light-induced isomerization of 11-cis to all-trans retinal triggers a conformational change that activates signaling via G-proteins. Subsequent receptor phosphorylation mediates displacement of the bound G-protein alpha subunit by arrestin and terminates signaling. The chain is Rhodopsin (rho) from Cottocomephorus grewingkii (Baikal yellowfin).